A 432-amino-acid polypeptide reads, in one-letter code: Leucine-rich repeat-containing protein ODA7 (432 aa).

5 LRR repeats span residues 47-68 (NLKA…PPLA), 69-90 (DLKC…EAVP), 91-112 (GLDT…ACCP), 113-134 (ALRT…AHLA), and 138-159 (ALQT…DILK). The region spanning 173-211 (PVVSNIKNYRKVLVTSIPSLTYLDDRPVFDNERKIAQAW) is the LRRCT domain. A coiled-coil region spans residues 212–243 (LEGGLEGERAMRNQLKEEEEERSRKNHEFMMQ). Disordered regions lie at residues 297–332 (RPGE…AAAE) and 368–432 (EELD…NDLD). Composition is skewed to low complexity over residues 323 to 332 (GAWGSGAAAE) and 407 to 425 (VAAA…ISAA).

The protein belongs to the DNAAF1 family. In terms of assembly, interacts with both outer row and I1 inner row dyneins.

The protein resides in the cytoplasm. Its subcellular location is the cytoskeleton. It is found in the cilium axoneme. In terms of biological role, cilium-specific protein required for cilia structures. Axonemal dynein-associated protein that participates in a structural link between inner and outer row dyneins. The chain is Leucine-rich repeat-containing protein ODA7 (ODA7) from Chlamydomonas reinhardtii (Chlamydomonas smithii).